Consider the following 485-residue polypeptide: Pyruvate kinase (485 aa).

A substrate-binding site is contributed by Arg-33. Positions 35, 37, 67, and 68 each coordinate K(+). 35–38 (NFSH) lines the ATP pocket. ATP contacts are provided by Arg-74 and Lys-155. Glu-221 contributes to the Mg(2+) binding site. 3 residues coordinate substrate: Gly-244, Asp-245, and Thr-277. Asp-245 contributes to the Mg(2+) binding site.

Belongs to the pyruvate kinase family. Homotetramer. It depends on Mg(2+) as a cofactor. The cofactor is K(+).

The enzyme catalyses pyruvate + ATP = phosphoenolpyruvate + ADP + H(+). It participates in carbohydrate degradation; glycolysis; pyruvate from D-glyceraldehyde 3-phosphate: step 5/5. The protein is Pyruvate kinase (pyk) of Chlamydia trachomatis serovar D (strain ATCC VR-885 / DSM 19411 / UW-3/Cx).